The following is a 356-amino-acid chain: sn-glycerol-3-phosphate import ATP-binding protein UgpC (356 aa).

The ABC transporter domain maps to 4–235; the sequence is LKLQAVTKSW…PASLFVASFI (232 aa). Position 37-44 (37-44) interacts with ATP; the sequence is GPSGCGKS.

Belongs to the ABC transporter superfamily. sn-glycerol-3-phosphate importer (TC 3.A.1.1.3) family. In terms of assembly, the complex is composed of two ATP-binding proteins (UgpC), two transmembrane proteins (UgpA and UgpE) and a solute-binding protein (UgpB).

The protein resides in the cell inner membrane. The enzyme catalyses sn-glycerol 3-phosphate(out) + ATP + H2O = sn-glycerol 3-phosphate(in) + ADP + phosphate + H(+). The catalysed reaction is glycerol 2-phosphate(out) + ATP + H2O = glycerol 2-phosphate(in) + ADP + phosphate + H(+). With respect to regulation, ATPase activity is stimulated when UgpB is bound to G3P. Transport is inhibited in vivo by increasing levels of internal phosphate. However, ATPase activity in proteoliposomes is neither inhibited by phosphate nor by the signal transducing protein PhoU or the phosphodiesterase UgpQ. Activated by gluconate and inhibited by fumarate. Its function is as follows. Part of the ABC transporter complex UgpBAEC involved in sn-glycerol-3-phosphate (G3P) import. Responsible for energy coupling to the transport system. Can also transport glycerophosphoryl diesters, which are hydrolyzed to G3P and alcohol during transport. The G3P moiety can be detected in the cytoplasm whereas the corresponding alcohol is usually found in the culture medium. It was proposed by Yang et al that the complex could also transport glycerol-2-phosphate (G2P) in vivo, but it was shown later by Wuttge et al that UgpB does not bind G2P, questioning this transport activity. G2P might be converted in the periplasm to G3P before its transport. The protein is sn-glycerol-3-phosphate import ATP-binding protein UgpC of Escherichia coli (strain K12).